The sequence spans 190 residues: Capsid protein (190 aa).

Methionine 1 is subject to N-acetylmethionine; by host.

The protein belongs to the tymoviruses capsid protein family.

The protein localises to the virion. Its function is as follows. Self-assembles to form a T=3 icosahedral capsid composed of 180 copies of the capsid protein. The capsid encapsulates the single-stranded RNA genome. This is Capsid protein from Atropa belladonna (Belladonna).